Here is a 332-residue protein sequence, read N- to C-terminus: Mitochondrial glycine transporter (332 aa).

Solcar repeat units follow at residues 11-94 (SSSY…LRQN), 121-205 (LSNL…LKKR), and 235-319 (TSAS…LIRR). 6 helical membrane-spanning segments follow: residues 17 to 42 (FGAG…TRVQ), 69 to 95 (GTVP…RQNV), 127 to 152 (LTTG…VRYE), 180 to 203 (GFGA…EELK), 239 to 265 (INFG…KTRI), and 294 to 312 (GLGL…AWTI).

Belongs to the mitochondrial carrier (TC 2.A.29) family. SLC25A38 subfamily.

It localises to the mitochondrion inner membrane. It catalyses the reaction glycine(in) = glycine(out). Functionally, mitochondrial glycine transporter that imports glycine into the mitochondrial matrix. Plays an important role in providing glycine for the first enzymatic step in heme biosynthesis, the condensation of glycine with succinyl-CoA to produce 5-aminolevulinate (ALA) in the mitochondrial matrix. In Botryotinia fuckeliana (strain B05.10) (Noble rot fungus), this protein is Mitochondrial glycine transporter.